The primary structure comprises 4924 residues: Hydroxamate-type ferrichrome siderophore peptide synthetase (4924 aa).

Carrier domains follow at residues 715-791, 2172-2246, 3254-3328, and 4402-4478; these read NQSE…ILLK, DGFQ…KRRR, NVVE…NTQT, and IHLN…QYEK. O-(pantetheine 4'-phosphoryl)serine occurs at positions 752, 2206, 3288, and 4439.

It belongs to the ATP-dependent AMP-binding enzyme family.

The protein resides in the cytoplasm. In terms of biological role, involved in intracellular and extracellular ferrichrome siderophore biosynthesis. The chain is Hydroxamate-type ferrichrome siderophore peptide synthetase (sib1) from Schizosaccharomyces pombe (strain 972 / ATCC 24843) (Fission yeast).